Consider the following 465-residue polypeptide: Cysteine--tRNA ligase (465 aa).

Cysteine 29 serves as a coordination point for Zn(2+). The 'HIGH' region signature appears at 31-41 (PTVYNYIHIGN). Cysteine 209, histidine 234, and glutamate 238 together coordinate Zn(2+). The 'KMSKS' region signature appears at 266 to 270 (KMSKS). Lysine 269 serves as a coordination point for ATP. Serine 270 carries the post-translational modification Phosphoserine.

Belongs to the class-I aminoacyl-tRNA synthetase family. Monomer. It depends on Zn(2+) as a cofactor.

It localises to the cytoplasm. The enzyme catalyses tRNA(Cys) + L-cysteine + ATP = L-cysteinyl-tRNA(Cys) + AMP + diphosphate. This Bacillus cereus (strain 03BB102) protein is Cysteine--tRNA ligase.